We begin with the raw amino-acid sequence, 273 residues long: 5-deoxy-glucuronate isomerase (273 aa).

This sequence belongs to the isomerase IolB family.

The enzyme catalyses 5-deoxy-D-glucuronate = 5-dehydro-2-deoxy-D-gluconate. It participates in polyol metabolism; myo-inositol degradation into acetyl-CoA; acetyl-CoA from myo-inositol: step 4/7. Its function is as follows. Involved in the isomerization of 5-deoxy-glucuronate (5DG) to 5-dehydro-2-deoxy-D-gluconate (DKG or 2-deoxy-5-keto-D-gluconate). The chain is 5-deoxy-glucuronate isomerase from Listeria innocua serovar 6a (strain ATCC BAA-680 / CLIP 11262).